We begin with the raw amino-acid sequence, 115 residues long: Salivary protein gSG6 (115 aa).

An N-terminal signal peptide occupies residues M1 to A28.

In terms of tissue distribution, female saliva (at protein level). Distal-lateral lobes of female salivary gland (at protein level). Not detected in male salivary gland (at protein level).

The protein resides in the secreted. Functionally, required for efficient probing and blood feeding. This is Salivary protein gSG6 from Anopheles gambiae (African malaria mosquito).